The primary structure comprises 128 residues: Large ribosomal subunit protein bL12 (128 aa).

Belongs to the bacterial ribosomal protein bL12 family. Homodimer. Part of the ribosomal stalk of the 50S ribosomal subunit. Forms a multimeric L10(L12)X complex, where L10 forms an elongated spine to which 2 to 4 L12 dimers bind in a sequential fashion. Binds GTP-bound translation factors.

In terms of biological role, forms part of the ribosomal stalk which helps the ribosome interact with GTP-bound translation factors. Is thus essential for accurate translation. The protein is Large ribosomal subunit protein bL12 of Thermotoga petrophila (strain ATCC BAA-488 / DSM 13995 / JCM 10881 / RKU-1).